Reading from the N-terminus, the 478-residue chain is MNHEVHFGRIERRHMRRVKNIFFVGIGGTGMSGIAEVLLNLGYSISGSDIKDSAVTQYLAQKGAQIFIGHAAENVEHADVVVVSSAIAENNVEVKQARALEIPVIRRAQMLAELMRFRFGIAIAGTHGKTTTTSLTASLLSDAGLDPTFVIGGILTAAGSNARLGEGHYLVAESDESDCSFWLLQPMISIVTNIDADHLENYNGSYETLKAGFVRFLHNLPFYGLAVLCIDDAGVRSILPEVGRPVRTYGFSEDADVRAINVRQKGLAMHFDVIAHDEDRCFSVTLNMAGKHNVLNALAAIIVGEELGIDRETIIEGLAQFKGVARRFTHHGRIAHDHGFADVFEDYGHHPREIKAVLDAAMEGFAGRRIVAVFQPHRFTRTRDLLDDFAEVLAVCDCLVLTEVYAAGEEPIAGADARDLTRAIRAHGRVEPIFIADKEEIVPHLRHDILQDDDVVIFFGAGDIGRVAKMMDELKIKE.

125–131 (GTHGKTT) provides a ligand contact to ATP.

It belongs to the MurCDEF family.

It is found in the cytoplasm. It carries out the reaction UDP-N-acetyl-alpha-D-muramate + L-alanine + ATP = UDP-N-acetyl-alpha-D-muramoyl-L-alanine + ADP + phosphate + H(+). It participates in cell wall biogenesis; peptidoglycan biosynthesis. In terms of biological role, cell wall formation. The protein is UDP-N-acetylmuramate--L-alanine ligase of Dichelobacter nodosus (strain VCS1703A).